The chain runs to 131 residues: Small ribosomal subunit protein uS8 (131 aa).

The protein belongs to the universal ribosomal protein uS8 family. As to quaternary structure, part of the 30S ribosomal subunit. Contacts proteins S5 and S12.

Its function is as follows. One of the primary rRNA binding proteins, it binds directly to 16S rRNA central domain where it helps coordinate assembly of the platform of the 30S subunit. This chain is Small ribosomal subunit protein uS8, found in Methylococcus capsulatus (strain ATCC 33009 / NCIMB 11132 / Bath).